The sequence spans 440 residues: Suppressor of cytokine signaling 4 (440 aa).

The span at 1-10 (MAENNENISK) shows a compositional bias: polar residues. The disordered stretch occupies residues 1-29 (MAENNENISKNVDVRPKTSRSRSADRKDG). Residues 12 to 29 (VDVRPKTSRSRSADRKDG) show a composition bias toward basic and acidic residues. The region spanning 286 to 381 (CYWGVMDKYA…FFEPLLSTPL (96 aa)) is the SH2 domain. Positions 376-425 (LLSTPLIRTFPFSLQHICRTVICNCTTYDGIDALPIPSSMKLYLKEYHYK) constitute an SOCS box domain.

It participates in protein modification; protein ubiquitination. Functionally, SOCS family proteins form part of a classical negative feedback system that regulates cytokine signal transduction. Substrate-recognition component of a SCF-like ECS (Elongin BC-CUL2/5-SOCS-box protein) E3 ubiquitin-protein ligase complex which mediates the ubiquitination and subsequent proteasomal degradation of target proteins. Inhibits EGF signaling by mediating the degradation of the Tyr-phosphorylated EGF receptor/EGFR. The chain is Suppressor of cytokine signaling 4 (SOCS4) from Homo sapiens (Human).